A 449-amino-acid polypeptide reads, in one-letter code: Glutamyl-tRNA reductase (449 aa).

Substrate is bound by residues 58 to 61 (TCNR), Ser-121, 126 to 128 (ETQ), and Gln-132. Cys-59 functions as the Nucleophile in the catalytic mechanism. 203–208 (GLGEMA) contributes to the NADP(+) binding site.

This sequence belongs to the glutamyl-tRNA reductase family. In terms of assembly, homodimer.

The catalysed reaction is (S)-4-amino-5-oxopentanoate + tRNA(Glu) + NADP(+) = L-glutamyl-tRNA(Glu) + NADPH + H(+). It functions in the pathway porphyrin-containing compound metabolism; protoporphyrin-IX biosynthesis; 5-aminolevulinate from L-glutamyl-tRNA(Glu): step 1/2. Its function is as follows. Catalyzes the NADPH-dependent reduction of glutamyl-tRNA(Glu) to glutamate 1-semialdehyde (GSA). The sequence is that of Glutamyl-tRNA reductase from Helicobacter pylori (strain P12).